The sequence spans 140 residues: NADPH-dependent 7-cyano-7-deazaguanine reductase (140 aa).

C51 functions as the Thioimide intermediate in the catalytic mechanism. The active-site Proton donor is D58. Substrate-binding positions include 73 to 75 (LES) and 92 to 93 (HE).

The protein belongs to the GTP cyclohydrolase I family. QueF type 1 subfamily.

It localises to the cytoplasm. It catalyses the reaction 7-aminomethyl-7-carbaguanine + 2 NADP(+) = 7-cyano-7-deazaguanine + 2 NADPH + 3 H(+). The protein operates within tRNA modification; tRNA-queuosine biosynthesis. In terms of biological role, catalyzes the NADPH-dependent reduction of 7-cyano-7-deazaguanine (preQ0) to 7-aminomethyl-7-deazaguanine (preQ1). The sequence is that of NADPH-dependent 7-cyano-7-deazaguanine reductase from Syntrophus aciditrophicus (strain SB).